The chain runs to 176 residues: MSSSSPINENDNGNIENNNETNITENGDNGESIDKKDDNIVLPYENDEEEANYLRFIMELEFIQCLSNPRYLNYLAQNRYFQDKAFVNYLVYLQYWKKPEYAKFIVYPQSLYFLDLLQEERFRQELNHSQSTDFIHEQQFYHWQYYRNNRMSIKEQELQQQQQQQQQQQVQPPTTV.

The disordered stretch occupies residues 1 to 38 (MSSSSPINENDNGNIENNNETNITENGDNGESIDKKDD). Residues 7–30 (INENDNGNIENNNETNITENGDNG) show a composition bias toward low complexity.

This sequence belongs to the Mediator complex subunit 31 family. As to quaternary structure, component of the Mediator complex.

It is found in the nucleus. Component of the Mediator complex, a coactivator involved in the regulated transcription of nearly all RNA polymerase II-dependent genes. Mediator functions as a bridge to convey information from gene-specific regulatory proteins to the basal RNA polymerase II transcription machinery. Mediator is recruited to promoters by direct interactions with regulatory proteins and serves as a scaffold for the assembly of a functional preinitiation complex with RNA polymerase II and the general transcription factors. The sequence is that of Putative mediator of RNA polymerase II transcription subunit 31 (med31) from Dictyostelium discoideum (Social amoeba).